The following is a 122-amino-acid chain: Large ribosomal subunit protein uL14 (122 aa).

This sequence belongs to the universal ribosomal protein uL14 family. As to quaternary structure, part of the 50S ribosomal subunit. Forms a cluster with proteins L3 and L19. In the 70S ribosome, L14 and L19 interact and together make contacts with the 16S rRNA in bridges B5 and B8.

Functionally, binds to 23S rRNA. Forms part of two intersubunit bridges in the 70S ribosome. In Chlorobium chlorochromatii (strain CaD3), this protein is Large ribosomal subunit protein uL14.